We begin with the raw amino-acid sequence, 605 residues long: UvrABC system protein C (605 aa).

Positions 14-92 (QSCGVYKMIG…IKSLKPSYNI (79 aa)) constitute a GIY-YIG domain. One can recognise a UVR domain in the interval 202 to 237 (KEVQRQLFSTMEKCSREMNYELAAVYRDRLKFLQQI).

This sequence belongs to the UvrC family. As to quaternary structure, interacts with UvrB in an incision complex.

Its subcellular location is the cytoplasm. In terms of biological role, the UvrABC repair system catalyzes the recognition and processing of DNA lesions. UvrC both incises the 5' and 3' sides of the lesion. The N-terminal half is responsible for the 3' incision and the C-terminal half is responsible for the 5' incision. The protein is UvrABC system protein C of Wolbachia pipientis subsp. Culex pipiens (strain wPip).